We begin with the raw amino-acid sequence, 372 residues long: Mitogen-activated protein kinase spk1 (372 aa).

Over residues 1–25 the composition is skewed to polar residues; sequence MASATSTPTIADGNSNKESVATSRS. Positions 1–29 are disordered; the sequence is MASATSTPTIADGNSNKESVATSRSPHTH. In terms of domain architecture, Protein kinase spans 39-327; it reads YEMINLIGQG…AEEALKHPYV (289 aa). Residues 45–53 and lysine 68 each bind ATP; that span reads IGQGAYGVV. The active-site Proton acceptor is aspartate 163. Threonine 199 carries the phosphothreonine modification. The short motif at 199-201 is the TXY element; it reads TEY. Phosphotyrosine is present on tyrosine 201.

This sequence belongs to the protein kinase superfamily. CMGC Ser/Thr protein kinase family. MAP kinase subfamily. It depends on Mg(2+) as a cofactor. Post-translationally, dually phosphorylated on Thr-199 and Tyr-201, which activates the enzyme.

It localises to the nucleus. It catalyses the reaction L-seryl-[protein] + ATP = O-phospho-L-seryl-[protein] + ADP + H(+). It carries out the reaction L-threonyl-[protein] + ATP = O-phospho-L-threonyl-[protein] + ADP + H(+). Its activity is regulated as follows. Activated by tyrosine and threonine phosphorylation. In terms of biological role, involved in mating signal transduction pathway. This is Mitogen-activated protein kinase spk1 (spk1) from Schizosaccharomyces pombe (strain 972 / ATCC 24843) (Fission yeast).